The following is a 405-amino-acid chain: Serpin I2 (405 aa).

The N-terminal stretch at 1–18 (MDTIFLWSLLLLFFGSQA) is a signal peptide. N-linked (GlcNAc...) asparagine glycosylation is found at N202, N207, and N306.

The protein belongs to the serpin family. In terms of tissue distribution, expressed in pancreas and adipose tissues.

The protein localises to the secreted. In Homo sapiens (Human), this protein is Serpin I2 (SERPINI2).